The primary structure comprises 285 residues: Putative pyruvate, phosphate dikinase regulatory protein (285 aa).

Residue 165-172 (GVSRTSKT) coordinates ADP.

Belongs to the pyruvate, phosphate/water dikinase regulatory protein family. PDRP subfamily.

It carries out the reaction N(tele)-phospho-L-histidyl/L-threonyl-[pyruvate, phosphate dikinase] + ADP = N(tele)-phospho-L-histidyl/O-phospho-L-threonyl-[pyruvate, phosphate dikinase] + AMP + H(+). It catalyses the reaction N(tele)-phospho-L-histidyl/O-phospho-L-threonyl-[pyruvate, phosphate dikinase] + phosphate + H(+) = N(tele)-phospho-L-histidyl/L-threonyl-[pyruvate, phosphate dikinase] + diphosphate. Bifunctional serine/threonine kinase and phosphorylase involved in the regulation of the pyruvate, phosphate dikinase (PPDK) by catalyzing its phosphorylation/dephosphorylation. In Lactobacillus delbrueckii subsp. bulgaricus (strain ATCC BAA-365 / Lb-18), this protein is Putative pyruvate, phosphate dikinase regulatory protein.